Here is a 243-residue protein sequence, read N- to C-terminus: Toxin CcTX-1 (243 aa).

Basic and acidic residues predominate over residues 1–25; that stretch reads SSPEKKNDMSKPGRMRFDNKKEPRS. The tract at residues 1-48 is disordered; that stretch reads SSPEKKNDMSKPGRMRFDNKKEPRSSAKNSGNGYGCVDVNAGREPLTG.

Contains disulfide bonds. Nematocytes.

It is found in the secreted. It localises to the nematocyst. The protein resides in the target cell membrane. Has potent hemolytic activity. Is lethal to crayfish. Causes cutaneous inflammation in humans. May act as a pore-forming toxin, disrupting normal transmembrane ion concentration gradients in susceptible cells. This chain is Toxin CcTX-1, found in Cyanea capillata (Lion's mane jellyfish).